A 417-amino-acid chain; its full sequence is Serine hydroxymethyltransferase (417 aa).

(6S)-5,6,7,8-tetrahydrofolate is bound by residues Leu121 and 125 to 127 (GHL). N6-(pyridoxal phosphate)lysine is present on Lys229. 355–357 (SPF) is a (6S)-5,6,7,8-tetrahydrofolate binding site.

This sequence belongs to the SHMT family. In terms of assembly, homodimer. The cofactor is pyridoxal 5'-phosphate.

The protein resides in the cytoplasm. It carries out the reaction (6R)-5,10-methylene-5,6,7,8-tetrahydrofolate + glycine + H2O = (6S)-5,6,7,8-tetrahydrofolate + L-serine. Its pathway is one-carbon metabolism; tetrahydrofolate interconversion. The protein operates within amino-acid biosynthesis; glycine biosynthesis; glycine from L-serine: step 1/1. In terms of biological role, catalyzes the reversible interconversion of serine and glycine with tetrahydrofolate (THF) serving as the one-carbon carrier. This reaction serves as the major source of one-carbon groups required for the biosynthesis of purines, thymidylate, methionine, and other important biomolecules. Also exhibits THF-independent aldolase activity toward beta-hydroxyamino acids, producing glycine and aldehydes, via a retro-aldol mechanism. This Erwinia tasmaniensis (strain DSM 17950 / CFBP 7177 / CIP 109463 / NCPPB 4357 / Et1/99) protein is Serine hydroxymethyltransferase.